We begin with the raw amino-acid sequence, 80 residues long: Large ribosomal subunit protein bL31B (80 aa).

This sequence belongs to the bacterial ribosomal protein bL31 family. Type B subfamily. As to quaternary structure, part of the 50S ribosomal subunit.

This Shouchella clausii (strain KSM-K16) (Alkalihalobacillus clausii) protein is Large ribosomal subunit protein bL31B.